We begin with the raw amino-acid sequence, 564 residues long: Interactor of constitutive active ROPs 3 (564 aa).

Disordered regions lie at residues 1 to 73 (MQTQ…SRIT) and 88 to 135 (KAKD…SALE). A compositionally biased stretch (polar residues) spans 33–44 (ESSSSPISATNR). Basic and acidic residues-rich tracts occupy residues 63–73 (VSEKKRPSRIT) and 98–123 (TSKK…KLEE). 2 coiled-coil regions span residues 70–133 (SRIT…ETSA) and 231–514 (AETE…AATA). S533 is subject to Phosphoserine.

This sequence belongs to the ICR family. Interacts with ARAC11 in vitro. In terms of tissue distribution, expressed in flowers.

Functionally, acts as a scaffold, mediating interaction of ROPs with different proteins. This chain is Interactor of constitutive active ROPs 3 (ICR3), found in Arabidopsis thaliana (Mouse-ear cress).